The following is a 970-amino-acid chain: Testis anion transporter 1 (970 aa).

Residues 1–95 (MAQLERSAIS…YRLKDWLLGD (95 aa)) lie on the Cytoplasmic side of the membrane. The helical transmembrane segment at 96 to 116 (LLAGISVGLVQVPQGLTLSLL) threads the bilayer. The Extracellular portion of the chain corresponds to 117 to 119 (ARQ). The chain crosses the membrane as a helical span at residues 120-140 (LIPPLNIAYAAFCSSVIYVIF). At 141 to 146 (GSCHQM) the chain is on the cytoplasmic side. The chain crosses the membrane as a helical span at residues 147–167 (SIGSFFLVSALLINVLKVSPF). At 168 to 202 (NNGQLVMGSFVKNEFSAPSYLMGYNKSLSVVATTT) the chain is on the extracellular side. A glycan (N-linked (GlcNAc...) asparagine) is linked at Asn192. The helical transmembrane segment at 203-223 (FLTGIIQLIMGVLGLGFIATY) threads the bilayer. Residues 224–232 (LPESAMSAY) lie on the Cytoplasmic side of the membrane. The helical transmembrane segment at 233 to 253 (LAAVALHIMLSQLTFIFGIMI) threads the bilayer. The Extracellular portion of the chain corresponds to 254 to 270 (SFHAGPISFFYDIINYC). A helical membrane pass occupies residues 271-291 (VALPKANSTSILVFLTVVVAL). The Cytoplasmic portion of the chain corresponds to 292-307 (RINKCIRISFNQYPIE). The helical transmembrane segment at 308–328 (FPMELFLIIGFTVIANKISMA) threads the bilayer. At 329-355 (TETSQTLIDMIPYSFLLPVTPDFSLLP) the chain is on the extracellular side. Residues 356 to 376 (KIILQAFSLSLVSSFLLIFLG) traverse the membrane as a helical segment. Residues 377-392 (KKIASLHNYSVNSNQD) are Cytoplasmic-facing. The helical transmembrane segment at 393–413 (LIAIGLCNVVSSFFRSCVFTG) threads the bilayer. Residues 414-429 (AIARTIIQDKSGGRQQ) lie on the Extracellular side of the membrane. Residues 430-450 (FASLVGAGVMLLLMVKMGHFF) form a helical membrane-spanning segment. Topologically, residues 451–452 (YT) are cytoplasmic. Residues 453–473 (LPNAVLAGIILSNVIPYLETI) traverse the membrane as a helical segment. Residues 474-497 (SNLPSLWRQDQYDCALWMMTFSSS) lie on the Extracellular side of the membrane. The chain crosses the membrane as a helical span at residues 498-518 (IFLGLDIGLIISVVSAFFITT). Over 519-970 (VRSHRAKILL…SPEGNSNEDV (452 aa)) the chain is Cytoplasmic. The 253-residue stretch at 543 to 795 (DYREIITIPG…LSVHDAVLFA (253 aa)) folds into the STAS domain. Positions 664–970 (TVSSVSQKNQ…SPEGNSNEDV (307 aa)) are interaction with RACGAP1. Residues 858–868 (SELDLELESEQ) are compositionally biased toward acidic residues. A disordered region spans residues 858–970 (SELDLELESE…SPEGNSNEDV (113 aa)). The segment covering 877-898 (DLDRELEPEMEPKAETETKTQT) has biased composition (basic and acidic residues). Residues 938-948 (STQSQTQTRTW) show a composition bias toward low complexity.

It belongs to the SLC26A/SulP transporter (TC 2.A.53) family. In terms of assembly, interacts with RACGAP1. Interacts with CFTR; stimulates anion transport activity of CFTR. Post-translationally, N-glycosylated. As to expression, expression observed exclusively in testis, restricted to the meiotic phase of the germ cell. Abundant expression located in the seminiferous tubules, concentrated on the luminal side of the tubuli harboring the spermatocytes and spermatids.

The protein resides in the membrane. It carries out the reaction sulfate(out) + chloride(in) = sulfate(in) + chloride(out). The enzyme catalyses oxalate(in) + chloride(out) = oxalate(out) + chloride(in). With respect to regulation, activity is inhibited by 4,4'-Di-isothiocyanatostilbene-2,2'-disulfonic acid (DIDS - an inhibitor of several anion channels and transporters) and gluconate. Its function is as follows. Antiporter that mediates the exchange of sulfate and oxalate against chloride ions across a membrane. Stimulates anion transport activity of CFTR. May cooperate with CFTR in the regulation of chloride and bicarbonate ions fluxes required for activation of the ADCY10/PKA pathway during sperm motility and sperm capacitation. May play a role in sperm tail differentiation and motility and hence male fertility. This chain is Testis anion transporter 1, found in Homo sapiens (Human).